Here is a 187-residue protein sequence, read N- to C-terminus: ATP synthase subunit b 2 (187 aa).

The helical transmembrane segment at 39 to 61 threads the bilayer; the sequence is SQLVWLVLSFAALYLLMSRVALP.

This sequence belongs to the ATPase B chain family. As to quaternary structure, F-type ATPases have 2 components, F(1) - the catalytic core - and F(0) - the membrane proton channel. F(1) has five subunits: alpha(3), beta(3), gamma(1), delta(1), epsilon(1). F(0) has three main subunits: a(1), b(2) and c(10-14). The alpha and beta chains form an alternating ring which encloses part of the gamma chain. F(1) is attached to F(0) by a central stalk formed by the gamma and epsilon chains, while a peripheral stalk is formed by the delta and b chains.

The protein localises to the cell inner membrane. F(1)F(0) ATP synthase produces ATP from ADP in the presence of a proton or sodium gradient. F-type ATPases consist of two structural domains, F(1) containing the extramembraneous catalytic core and F(0) containing the membrane proton channel, linked together by a central stalk and a peripheral stalk. During catalysis, ATP synthesis in the catalytic domain of F(1) is coupled via a rotary mechanism of the central stalk subunits to proton translocation. In terms of biological role, component of the F(0) channel, it forms part of the peripheral stalk, linking F(1) to F(0). This is ATP synthase subunit b 2 from Parvibaculum lavamentivorans (strain DS-1 / DSM 13023 / NCIMB 13966).